Reading from the N-terminus, the 542-residue chain is Plasminogen-binding protein PgbB (542 aa).

The interval 399 to 542 (KSASKKSQKG…RRKALEMNKK (144 aa)) is disordered. 2 stretches are compositionally biased toward basic and acidic residues: residues 418-435 (QERH…ENKV) and 447-456 (VKTRRPEPIR). Residues 457 to 467 (DQNNATQQGET) show a composition bias toward polar residues. The span at 481 to 542 (NAAKKEVPKP…RRKALEMNKK (62 aa)) shows a compositional bias: basic and acidic residues.

It is found in the cell surface. Binds plasminogen, specifically, and in a concentration and lysine-dependent manner. Plasminogen is the precursor of plasmin, a serine protease that cleaves fibrin, fibronectin, laminin and vitronectin. Acquisition of plasminogen/plasmin could enable H.pylori to degrade host components. The chain is Plasminogen-binding protein PgbB (pgbB) from Helicobacter pylori (strain ATCC 700392 / 26695) (Campylobacter pylori).